Consider the following 396-residue polypeptide: Glycerate kinase (396 aa).

This sequence belongs to the glycerate kinase type-2 family.

It localises to the cytoplasm. It catalyses the reaction (R)-glycerate + ATP = (2R)-3-phosphoglycerate + ADP + H(+). This is Glycerate kinase (GLYCTK) from Macaca fascicularis (Crab-eating macaque).